A 467-amino-acid chain; its full sequence is UDP-N-acetylmuramate--L-alanine ligase (467 aa).

An ATP-binding site is contributed by 114 to 120; it reads GTHGKTT.

It belongs to the MurCDEF family.

The protein resides in the cytoplasm. It carries out the reaction UDP-N-acetyl-alpha-D-muramate + L-alanine + ATP = UDP-N-acetyl-alpha-D-muramoyl-L-alanine + ADP + phosphate + H(+). Its pathway is cell wall biogenesis; peptidoglycan biosynthesis. Its function is as follows. Cell wall formation. This Rhodopseudomonas palustris (strain BisA53) protein is UDP-N-acetylmuramate--L-alanine ligase.